A 324-amino-acid chain; its full sequence is Pseudouridylate synthase RPUSD4, mitochondrial (324 aa).

A mitochondrion-targeting transit peptide spans 1 to 11; sequence MAAAGGGATRG. Residue Asp-105 is part of the active site.

The protein belongs to the pseudouridine synthase RluA family.

It localises to the mitochondrion matrix. The protein resides in the nucleus. It is found in the cytoplasm. The enzyme catalyses uridine in 5S rRNA = pseudouridine in 5S rRNA. The catalysed reaction is a uridine in tRNA = a pseudouridine in tRNA. It carries out the reaction a uridine in mRNA = a pseudouridine in mRNA. Catalyzes uridine to pseudouridine isomerization (pseudouridylation) of different mitochondrial RNA substrates. Acts on position 1397 in 16S mitochondrial ribosomal RNA (16S mt-rRNA). This modification is required for the assembly of 16S mt-rRNA into a functional mitochondrial ribosome. Acts on position 39 in mitochondrial tRNA(Phe). Also catalyzes pseudouridylation of mRNAs in nucleus: acts as a regulator of pre-mRNA splicing by mediating pseudouridylation of pre-mRNAs at locations associated with alternatively spliced regions. Pseudouridylation of pre-mRNAs near splice sites directly regulates mRNA splicing and mRNA 3'-end processing. The sequence is that of Pseudouridylate synthase RPUSD4, mitochondrial from Xenopus tropicalis (Western clawed frog).